The following is a 317-amino-acid chain: Beta-ketoacyl-[acyl-carrier-protein] synthase III (317 aa).

Catalysis depends on residues Cys-112 and His-244. Residues 245–249 (QANIR) form an ACP-binding region. Asn-274 is an active-site residue.

Belongs to the thiolase-like superfamily. FabH family. As to quaternary structure, homodimer.

It is found in the cytoplasm. The catalysed reaction is malonyl-[ACP] + acetyl-CoA + H(+) = 3-oxobutanoyl-[ACP] + CO2 + CoA. Its pathway is lipid metabolism; fatty acid biosynthesis. Catalyzes the condensation reaction of fatty acid synthesis by the addition to an acyl acceptor of two carbons from malonyl-ACP. Catalyzes the first condensation reaction which initiates fatty acid synthesis and may therefore play a role in governing the total rate of fatty acid production. Possesses both acetoacetyl-ACP synthase and acetyl transacylase activities. Its substrate specificity determines the biosynthesis of branched-chain and/or straight-chain of fatty acids. This chain is Beta-ketoacyl-[acyl-carrier-protein] synthase III, found in Rickettsia felis (strain ATCC VR-1525 / URRWXCal2) (Rickettsia azadi).